The chain runs to 270 residues: 5'-AMP-activated protein kinase subunit beta-1 (270 aa).

The segment at 1 to 46 (MGNTSSERAALERHGGHKTPRRDSSGGTKDGDRPKILMDSPEDADL) is disordered. Residue Gly2 is the site of N-myristoyl glycine attachment. At Thr4 the chain carries Phosphothreonine. Ser5 and Ser6 each carry phosphoserine. At Thr19 the chain carries Phosphothreonine. The span at 21 to 36 (RRDSSGGTKDGDRPKI) shows a compositional bias: basic and acidic residues. A phosphoserine; by autocatalysis mark is found at Ser24 and Ser25. Phosphoserine occurs at positions 40, 96, and 101. The glycogen-binding domain stretch occupies residues 68-163 (EVNDKAPAQA…QVKKTDFEVF (96 aa)). The residue at position 108 (Ser108) is a Phosphoserine; by autocatalysis. Thr148 carries the phosphothreonine modification. A Phosphoserine modification is found at Ser182.

The protein belongs to the 5'-AMP-activated protein kinase beta subunit family. As to quaternary structure, AMPK is a heterotrimer of an alpha catalytic subunit (PRKAA1 or PRKAA2), a beta (PRKAB1 or PRKAB2) and a gamma non-catalytic subunits (PRKAG1, PRKAG2 or PRKAG3). Interacts with FNIP1 and FNIP2. Post-translationally, phosphorylated when associated with the catalytic subunit (PRKAA1 or PRKAA2). Phosphorylated by ULK1; leading to negatively regulate AMPK activity and suggesting the existence of a regulatory feedback loop between ULK1 and AMPK.

In terms of biological role, non-catalytic subunit of AMP-activated protein kinase (AMPK), an energy sensor protein kinase that plays a key role in regulating cellular energy metabolism. In response to reduction of intracellular ATP levels, AMPK activates energy-producing pathways and inhibits energy-consuming processes: inhibits protein, carbohydrate and lipid biosynthesis, as well as cell growth and proliferation. AMPK acts via direct phosphorylation of metabolic enzymes, and by longer-term effects via phosphorylation of transcription regulators. Also acts as a regulator of cellular polarity by remodeling the actin cytoskeleton; probably by indirectly activating myosin. Beta non-catalytic subunit acts as a scaffold on which the AMPK complex assembles, via its C-terminus that bridges alpha (PRKAA1 or PRKAA2) and gamma subunits (PRKAG1, PRKAG2 or PRKAG3). The chain is 5'-AMP-activated protein kinase subunit beta-1 (PRKAB1) from Pongo abelii (Sumatran orangutan).